Consider the following 465-residue polypeptide: Protein dml1 (465 aa).

Serine 446 carries the phosphoserine modification.

Belongs to the misato family.

The protein resides in the mitochondrion. In terms of biological role, involved in the partitioning of the mitochondrial organelle and mitochondrial DNA (mtDNA) inheritance. In Schizosaccharomyces pombe (strain 972 / ATCC 24843) (Fission yeast), this protein is Protein dml1 (dml1).